The chain runs to 149 residues: Transcriptional repressor NrdR (149 aa).

A zinc finger lies at 3 to 34 (CPFCSHSETQVVETRISEDGDSIRRRRQCASC). In terms of domain architecture, ATP-cone spans 49-139 (PAIVKKDGRR…VYRSFEDIDE (91 aa)).

It belongs to the NrdR family. It depends on Zn(2+) as a cofactor.

Negatively regulates transcription of bacterial ribonucleotide reductase nrd genes and operons by binding to NrdR-boxes. This chain is Transcriptional repressor NrdR, found in Albidiferax ferrireducens (strain ATCC BAA-621 / DSM 15236 / T118) (Rhodoferax ferrireducens).